Consider the following 1125-residue polypeptide: Transcription-repair-coupling factor (1125 aa).

A Helicase ATP-binding domain is found at 597–758; it reads DMMSFKVMDR…LIKLRDISVL (162 aa). 610–617 serves as a coordination point for ATP; that stretch reads GDVGFGKT. The short motif at 711–714 is the DEEQ box element; that stretch reads DEEQ. The 160-residue stretch at 774-933 folds into the Helicase C-terminal domain; that stretch reads SFSELLIKHA…GFKIAMKDME (160 aa).

This sequence in the N-terminal section; belongs to the UvrB family. The protein in the C-terminal section; belongs to the helicase family. RecG subfamily.

It is found in the cytoplasm. Couples transcription and DNA repair by recognizing RNA polymerase (RNAP) stalled at DNA lesions. Mediates ATP-dependent release of RNAP and its truncated transcript from the DNA, and recruitment of nucleotide excision repair machinery to the damaged site. The chain is Transcription-repair-coupling factor from Borreliella burgdorferi (strain ATCC 35210 / DSM 4680 / CIP 102532 / B31) (Borrelia burgdorferi).